Reading from the N-terminus, the 291-residue chain is Tyrosine recombinase XerD (291 aa).

The Core-binding (CB) domain occupies 1-82 (MEEGLIDRLL…ACKRLYIWME (82 aa)). The 183-residue stretch at 103 to 285 (NIPTLITEQQ…ANVWLQGVVK (183 aa)) folds into the Tyr recombinase domain. Residues arginine 143, lysine 167, histidine 237, arginine 240, and histidine 263 contribute to the active site. Tyrosine 272 acts as the O-(3'-phospho-DNA)-tyrosine intermediate in catalysis.

This sequence belongs to the 'phage' integrase family. XerD subfamily. Forms a cyclic heterotetrameric complex composed of two molecules of XerC and two molecules of XerD.

The protein resides in the cytoplasm. Functionally, site-specific tyrosine recombinase, which acts by catalyzing the cutting and rejoining of the recombining DNA molecules. The XerC-XerD complex is essential to convert dimers of the bacterial chromosome into monomers to permit their segregation at cell division. It also contributes to the segregational stability of plasmids. The chain is Tyrosine recombinase XerD from Neisseria meningitidis serogroup B (strain ATCC BAA-335 / MC58).